We begin with the raw amino-acid sequence, 264 residues long: ATP synthase subunit a (264 aa).

The next 6 membrane-spanning stretches (helical) occupy residues 32–52 (IDSLFFSVGLGVLFLWLFHSV), 89–109 (VIAPLALTIFVWVFMMNFMDM), 134–154 (DLNITFSMAIGVFLLIIYYSI), 177–197 (IPVNFLLETVTLIAKPISLAL), 208–228 (LIFILIALMYGANWALSTLGV), and 235–255 (LIFHILVITLQAFIFMMLTIV).

This sequence belongs to the ATPase A chain family. In terms of assembly, F-type ATPases have 2 components, CF(1) - the catalytic core - and CF(0) - the membrane proton channel. CF(1) has five subunits: alpha(3), beta(3), gamma(1), delta(1), epsilon(1). CF(0) has three main subunits: a(1), b(2) and c(9-12). The alpha and beta chains form an alternating ring which encloses part of the gamma chain. CF(1) is attached to CF(0) by a central stalk formed by the gamma and epsilon chains, while a peripheral stalk is formed by the delta and b chains.

It is found in the cell inner membrane. In terms of biological role, key component of the proton channel; it plays a direct role in the translocation of protons across the membrane. In Shewanella piezotolerans (strain WP3 / JCM 13877), this protein is ATP synthase subunit a.